The chain runs to 326 residues: Ribosome biogenesis protein BRX1 homolog (326 aa).

A compositionally biased stretch (basic and acidic residues) spans 1 to 17; that stretch reads MVKPSKILEKIKKRTEP. Residues 1-66 form a disordered region; that stretch reads MVKPSKILEK…EENKNIEENK (66 aa). Acidic residues predominate over residues 22–57; the sequence is VVEEESDEEIIEQEGSEEEEEIVEEESEEEEEEVEE. In terms of domain architecture, Brix spans 75-268; that stretch reads KRVLFTSTRG…IDKIFSDGFG (194 aa).

The protein belongs to the BRX1 family.

The protein localises to the nucleus. Its subcellular location is the nucleolus. Required for biogenesis of the 60S ribosomal subunit. This is Ribosome biogenesis protein BRX1 homolog (bxdc2) from Dictyostelium discoideum (Social amoeba).